The chain runs to 89 residues: UPF0223 protein Bcer98_2663 (89 aa).

This sequence belongs to the UPF0223 family.

This chain is UPF0223 protein Bcer98_2663, found in Bacillus cytotoxicus (strain DSM 22905 / CIP 110041 / 391-98 / NVH 391-98).